A 235-amino-acid polypeptide reads, in one-letter code: Probable transcriptional regulatory protein Cj1172c (235 aa).

This sequence belongs to the TACO1 family.

The protein localises to the cytoplasm. This is Probable transcriptional regulatory protein Cj1172c from Campylobacter jejuni subsp. jejuni serotype O:2 (strain ATCC 700819 / NCTC 11168).